We begin with the raw amino-acid sequence, 830 residues long: Cadherin-16 (830 aa).

The N-terminal stretch at 1 to 21 (MISARPWLLYLSVIQAFTTEA) is a signal peptide. Residues 22 to 788 (QPAESLHTEV…MKGMPTKLSA (767 aa)) lie on the Extracellular side of the membrane. Cadherin domains are found at residues 27 to 128 (LHTE…VPQF), 133 to 237 (YRAQ…SIVE), 244 to 338 (EPVH…APVC), 343 to 451 (PTVN…APEF), 457 to 566 (GPVT…PLKL), and 571 to 667 (YETS…VPAL). N519, N604, and N724 each carry an N-linked (GlcNAc...) asparagine glycan. The ectodomain G stretch occupies residues 668-788 (TLSAGPSRHL…MKGMPTKLSA (121 aa)). Residues 789–809 (VGVLLGTLAAIGFILILVFTH) form a helical membrane-spanning segment. Residues 810–830 (LALARKDLDQPADSVPLKAAV) are Cytoplasmic-facing. A Phosphoserine modification is found at S823.

In terms of tissue distribution, kidney specific.

The protein resides in the cell membrane. In terms of biological role, cadherins are calcium-dependent cell adhesion proteins. They preferentially interact with themselves in a homophilic manner in connecting cells; cadherins may thus contribute to the sorting of heterogeneous cell types. The sequence is that of Cadherin-16 (Cdh16) from Mus musculus (Mouse).